We begin with the raw amino-acid sequence, 448 residues long: Iroquois-class homeodomain protein irx-3 (448 aa).

The homeobox; TALE-type DNA-binding region spans 108–170 (DPSRPKNATR…NARRRLKKEN (63 aa)). Disordered regions lie at residues 171–250 (KMTW…NAPE) and 387–410 (SGTA…DRSS). The span at 195–222 (KHEDDEEIDLENIDTEDIESKEDLDDPD) shows a compositional bias: acidic residues. Over residues 223–237 (TDIHSDSKTDARSDS) the composition is skewed to basic and acidic residues. Acidic residues predominate over residues 238 to 248 (EASDGFEDLNA). Positions 396–406 (AEPKHSTDSLT) are enriched in basic and acidic residues.

It belongs to the TALE/IRO homeobox family. Expressed in the neural plate in overlapping patterns with other irx members, which all share an anterior border of expression. Outside the nervous system and at tailbud stages, expressed in the developing otic vesicle, branchial arches, prospective heart region and pronephros.

Its subcellular location is the nucleus. Its function is as follows. Acts partially redundantly with other irx members in neural patterning. Required for formation of the posterior forebrain, midbrain, hindbrain, and to a lesser extent, spinal cord. Both up-regulates and down-regulates gene expression during neural development. Acts early in neural plate development to induce proneural gene expression and specify a neural precursor state. Also up-regulates repressors that prevent neuronal differentiation. Required during at least two stages of pronephros kidney development; during neurula stages, maintains transcription of key renal genes to define the size and identity of the pronephric anlage, probably in part through regulation of bmp-signaling. Subsequently required for proper formation of the intermediate tubule segment of the pronephros. This is Iroquois-class homeodomain protein irx-3 from Xenopus tropicalis (Western clawed frog).